A 451-amino-acid chain; its full sequence is Ribulose bisphosphate carboxylase large chain (451 aa).

Lys-5 carries the N6,N6,N6-trimethyllysine modification. The substrate site is built by Asn-114 and Thr-164. The active-site Proton acceptor is Lys-166. Position 168 (Lys-168) interacts with substrate. 3 residues coordinate Mg(2+): Lys-192, Asp-194, and Glu-195. N6-carboxylysine is present on Lys-192. The active-site Proton acceptor is His-285. Positions 286, 318, and 370 each coordinate substrate.

Belongs to the RuBisCO large chain family. Type I subfamily. Heterohexadecamer of 8 large chains and 8 small chains; disulfide-linked. The disulfide link is formed within the large subunit homodimers. It depends on Mg(2+) as a cofactor. The disulfide bond which can form in the large chain dimeric partners within the hexadecamer appears to be associated with oxidative stress and protein turnover.

It is found in the plastid. Its subcellular location is the chloroplast. It catalyses the reaction 2 (2R)-3-phosphoglycerate + 2 H(+) = D-ribulose 1,5-bisphosphate + CO2 + H2O. It carries out the reaction D-ribulose 1,5-bisphosphate + O2 = 2-phosphoglycolate + (2R)-3-phosphoglycerate + 2 H(+). In terms of biological role, ruBisCO catalyzes two reactions: the carboxylation of D-ribulose 1,5-bisphosphate, the primary event in carbon dioxide fixation, as well as the oxidative fragmentation of the pentose substrate in the photorespiration process. Both reactions occur simultaneously and in competition at the same active site. This chain is Ribulose bisphosphate carboxylase large chain, found in Aristea glauca.